The primary structure comprises 457 residues: Exodeoxyribonuclease 7 large subunit (457 aa).

The protein belongs to the XseA family. In terms of assembly, heterooligomer composed of large and small subunits.

It is found in the cytoplasm. The enzyme catalyses Exonucleolytic cleavage in either 5'- to 3'- or 3'- to 5'-direction to yield nucleoside 5'-phosphates.. Its function is as follows. Bidirectionally degrades single-stranded DNA into large acid-insoluble oligonucleotides, which are then degraded further into small acid-soluble oligonucleotides. This Enterobacter sp. (strain 638) protein is Exodeoxyribonuclease 7 large subunit.